Consider the following 198-residue polypeptide: Phycocyanobilin lyase CpcT homolog (198 aa).

It belongs to the CpcT/CpeT biliprotein lyase family.

Covalently attaches a chromophore to Cys residue(s) of phycobiliproteins. In vitro is not seen to act as a chromophore lyase for ApcA1, ApcA2, ApcB, ApcD, ApcF, CpcB or PecB, the lyase activity is therefore unsure. In Nostoc sp. (strain PCC 7120 / SAG 25.82 / UTEX 2576), this protein is Phycocyanobilin lyase CpcT homolog (cpcT2).